The sequence spans 85 residues: U5-theraphotoxin-Hhn1a (85 aa).

An N-terminal signal peptide occupies residues 1–21 (MKSQIFFAVAALFLLTVRTYA). Positions 22–49 (SKSKEQDLRDALFSAMFSADNQLNPQER) are excised as a propeptide. 3 disulfides stabilise this stretch: C51–C65, C58–C70, and C64–C77.

Belongs to the neurotoxin 10 (Hwtx-1) family. 18 (Hntx-VII) subfamily. Expressed by the venom gland.

The protein localises to the secreted. In terms of biological role, ion channel impairing toxin that inhibits voltage-gated sodium channels. The recombinantly expressed toxin shows a weak activity against Nav1.7/SCN9A, and shifts the voltage dependence of channel activation to more depolarized potentials. The sequence is that of U5-theraphotoxin-Hhn1a from Cyriopagopus hainanus (Chinese bird spider).